The chain runs to 153 residues: Large ribosomal subunit protein uL13 (153 aa).

The protein belongs to the universal ribosomal protein uL13 family. As to quaternary structure, part of the 50S ribosomal subunit.

Functionally, this protein is one of the early assembly proteins of the 50S ribosomal subunit, although it is not seen to bind rRNA by itself. It is important during the early stages of 50S assembly. The sequence is that of Large ribosomal subunit protein uL13 from Azorhizobium caulinodans (strain ATCC 43989 / DSM 5975 / JCM 20966 / LMG 6465 / NBRC 14845 / NCIMB 13405 / ORS 571).